The sequence spans 224 residues: Pro-thyrotropin-releasing hormone-B (224 aa).

A signal peptide spans 1-15 (MMFLWWLLLLGTAIS). The residue at position 75 (Q75) is a Pyrrolidone carboxylic acid. The residue at position 77 (P77) is a Proline amide. Residues 86 to 101 (EKRQHPGKRDLEDLQL) show a composition bias toward basic and acidic residues. Disordered regions lie at residues 86-131 (EKRQ…DWSR) and 150-212 (RQHP…NSGN). Q89 is modified (pyrrolidone carboxylic acid). Residue P91 is modified to Proline amide. Pyrrolidone carboxylic acid is present on Q105. At P107 the chain carries Proline amide. Over residues 110–129 (RYLEDMEKRQHPGKREEGDW) the composition is skewed to basic and acidic residues. Q119 is modified (pyrrolidone carboxylic acid). P121 is modified (proline amide). A Pyrrolidone carboxylic acid modification is found at Q151. Residue P153 is modified to Proline amide. A Pyrrolidone carboxylic acid modification is found at Q166. P168 is subject to Proline amide. Residues 182 to 199 (ENSKEVGKRQHPGKRYDP) are compositionally biased toward basic and acidic residues. The residue at position 191 (Q191) is a Pyrrolidone carboxylic acid. P193 carries the post-translational modification Proline amide.

It belongs to the TRH family.

Its subcellular location is the secreted. In Xenopus laevis (African clawed frog), this protein is Pro-thyrotropin-releasing hormone-B (trh-b).